A 143-amino-acid chain; its full sequence is MFLGEYRHTIDEKGRMIVPAKFREHLGTPFVITRGLDNCLFVYPQSEWDKLESQLKELPFTKKDARAFTRFFFSGASECELDKQGRMNVPQPLREYAKLEKECVVIGVSNRMEVWSKTLWEDYVSQSEDSFADIAENLIDFDL.

SpoVT-AbrB domains follow at residues 5–47 (EYRH…PQSE) and 76–119 (ASEC…SKTL).

This sequence belongs to the MraZ family. In terms of assembly, forms oligomers.

The protein localises to the cytoplasm. It is found in the nucleoid. This Shouchella clausii (strain KSM-K16) (Alkalihalobacillus clausii) protein is Transcriptional regulator MraZ.